The sequence spans 130 residues: Small ribosomal subunit protein uS11 (130 aa).

It belongs to the universal ribosomal protein uS11 family. In terms of assembly, part of the 30S ribosomal subunit. Interacts with proteins S7 and S18. Binds to IF-3.

In terms of biological role, located on the platform of the 30S subunit, it bridges several disparate RNA helices of the 16S rRNA. Forms part of the Shine-Dalgarno cleft in the 70S ribosome. The sequence is that of Small ribosomal subunit protein uS11 from Alkalilimnicola ehrlichii (strain ATCC BAA-1101 / DSM 17681 / MLHE-1).